A 291-amino-acid polypeptide reads, in one-letter code: Formamidopyrimidine-DNA glycosylase (291 aa).

Pro2 acts as the Schiff-base intermediate with DNA in catalysis. The active-site Proton donor is Glu3. The active-site Proton donor; for beta-elimination activity is Lys58. Residues His104, Arg123, and Lys166 each coordinate DNA. The FPG-type zinc finger occupies 257–291 (KVYDREGKPCPTCGGTVQRFVQNGRSTFWCPKCQK). Arg281 serves as the catalytic Proton donor; for delta-elimination activity.

It belongs to the FPG family. As to quaternary structure, monomer. Zn(2+) is required as a cofactor.

It carries out the reaction Hydrolysis of DNA containing ring-opened 7-methylguanine residues, releasing 2,6-diamino-4-hydroxy-5-(N-methyl)formamidopyrimidine.. It catalyses the reaction 2'-deoxyribonucleotide-(2'-deoxyribose 5'-phosphate)-2'-deoxyribonucleotide-DNA = a 3'-end 2'-deoxyribonucleotide-(2,3-dehydro-2,3-deoxyribose 5'-phosphate)-DNA + a 5'-end 5'-phospho-2'-deoxyribonucleoside-DNA + H(+). In terms of biological role, involved in base excision repair of DNA damaged by oxidation or by mutagenic agents. Acts as a DNA glycosylase that recognizes and removes damaged bases. Has a preference for oxidized purines, such as 7,8-dihydro-8-oxoguanine (8-oxoG). Has AP (apurinic/apyrimidinic) lyase activity and introduces nicks in the DNA strand. Cleaves the DNA backbone by beta-delta elimination to generate a single-strand break at the site of the removed base with both 3'- and 5'-phosphates. The chain is Formamidopyrimidine-DNA glycosylase from Rhodopseudomonas palustris (strain TIE-1).